We begin with the raw amino-acid sequence, 172 residues long: Fimbrial-like protein FimF (172 aa).

Residues M1–A21 form the signal peptide. Residues C41 and C81 are joined by a disulfide bond.

Belongs to the fimbrial protein family.

The protein localises to the fimbrium. This is Fimbrial-like protein FimF (fimF) from Salmonella typhimurium (strain LT2 / SGSC1412 / ATCC 700720).